The chain runs to 188 residues: Elongation factor P (188 aa).

Belongs to the elongation factor P family.

Its subcellular location is the cytoplasm. Its pathway is protein biosynthesis; polypeptide chain elongation. Its function is as follows. Involved in peptide bond synthesis. Stimulates efficient translation and peptide-bond synthesis on native or reconstituted 70S ribosomes in vitro. Probably functions indirectly by altering the affinity of the ribosome for aminoacyl-tRNA, thus increasing their reactivity as acceptors for peptidyl transferase. The sequence is that of Elongation factor P from Saccharopolyspora erythraea (strain ATCC 11635 / DSM 40517 / JCM 4748 / NBRC 13426 / NCIMB 8594 / NRRL 2338).